A 30-amino-acid polypeptide reads, in one-letter code: Conotoxin CcTx (30 aa).

P2 carries the post-translational modification 4-hydroxyproline. S7 carries O-linked (HexNAc...) serine glycosylation. Disulfide bonds link C12–C21, C13–C26, and C24–C30. A 4-hydroxyproline mark is found at P17 and P22.

In terms of processing, O-glycosylated at Ser-7 by a core type 9 glycan, containing both D- and L-galactose units (alpha-L-Galp-(1-&gt;4)-alpha-D- GlcpNAc-(1-&gt;6)-[alpha-L-Galp-(1-&gt;2)-bets-D-Galp-(1-&gt;3)-]alpha-D-GalpNAc-(1-&gt;O)). As to expression, expressed by the venom duct.

Its subcellular location is the secreted. May specifically activate neuronal voltage-gated sodium channels (Nav) at the resting membrane potential. Causes a marked contraction and extension of the caudal and dorsal fins in fish and noticeable spontaneous contractions of isolated frog neuromuscular preparations. The sequence is that of Conotoxin CcTx from Conus consors (Singed cone).